The chain runs to 554 residues: (E)-nerolidol synthase TPS18VF (554 aa).

The (2E,6E)-farnesyl diphosphate site is built by Arg276, Asp313, Asp317, Arg455, and Asp458. Mg(2+)-binding residues include Asp313 and Asp317. A DDXXD motif motif is present at residues Asp313–Asp317. Asp458, Ser462, and Glu466 together coordinate Mg(2+).

This sequence belongs to the terpene synthase family. Tpsb subfamily. Requires Mg(2+) as cofactor. The cofactor is Mn(2+). Highly expressed in glandular trichomes.

It carries out the reaction (2E,6E)-farnesyl diphosphate + H2O = (6E)-nerolidol + diphosphate. The enzyme catalyses (2E)-geranyl diphosphate + H2O = (S)-linalool + diphosphate. It participates in secondary metabolite biosynthesis; terpenoid biosynthesis. Its function is as follows. Involved in sesquiterpene olefins biosynthesis, constituants of cannabinoids and terpenoids-rich resins. Catalyzes primarily the conversion of (2E)-farnesyl diphosphate to (E)-nerolidol, and the conversion of (2E)-geranyl diphosphate to (+)linalool. This chain is (E)-nerolidol synthase TPS18VF, found in Cannabis sativa (Hemp).